A 49-amino-acid chain; its full sequence is Protein YdfW (49 aa).

Residues 16-49 (PKADHPWLTRRTQSHQQVKPPKLPKKKPDPDKKD) form a disordered region.

May be involved in H(2) production during fermentative growth. The chain is Protein YdfW (ydfW) from Escherichia coli (strain K12).